Here is a 130-residue protein sequence, read N- to C-terminus: Ribosome-binding factor A (130 aa).

The protein belongs to the RbfA family. Monomer. Binds 30S ribosomal subunits, but not 50S ribosomal subunits or 70S ribosomes.

Its subcellular location is the cytoplasm. In terms of biological role, one of several proteins that assist in the late maturation steps of the functional core of the 30S ribosomal subunit. Associates with free 30S ribosomal subunits (but not with 30S subunits that are part of 70S ribosomes or polysomes). Required for efficient processing of 16S rRNA. May interact with the 5'-terminal helix region of 16S rRNA. The polypeptide is Ribosome-binding factor A (Flavobacterium johnsoniae (strain ATCC 17061 / DSM 2064 / JCM 8514 / BCRC 14874 / CCUG 350202 / NBRC 14942 / NCIMB 11054 / UW101) (Cytophaga johnsonae)).